Consider the following 258-residue polypeptide: UPF0328 protein ECU02_0090 (258 aa).

Belongs to the UPF0328 family.

The chain is UPF0328 protein ECU02_0090 from Encephalitozoon cuniculi (strain GB-M1) (Microsporidian parasite).